A 574-amino-acid polypeptide reads, in one-letter code: Septation ring formation regulator EzrA (574 aa).

Over 1 to 7 (MSSGIIL) the chain is Extracellular. Residues 8 to 26 (LIVAIVLLVIIAYLVGVII) form a helical membrane-spanning segment. Over 27–574 (RKRNDSLITS…YEKTREHIRF (548 aa)) the chain is Cytoplasmic. Coiled coils occupy residues 102 to 141 (NFIR…EEKN), 274 to 350 (ELVT…ETES), and 459 to 520 (QLEA…SFEA).

Belongs to the EzrA family.

The protein localises to the cell membrane. In terms of biological role, negative regulator of FtsZ ring formation; modulates the frequency and position of FtsZ ring formation. Inhibits FtsZ ring formation at polar sites. Interacts either with FtsZ or with one of its binding partners to promote depolymerization. The sequence is that of Septation ring formation regulator EzrA from Streptococcus pyogenes serotype M3 (strain SSI-1).